Consider the following 149-residue polypeptide: Large ribosomal subunit protein uL15 (149 aa).

Residues 1-61 form a disordered region; it reads MELNSLRPAL…GGQMPLQRRL (61 aa). Basic residues predominate over residues 30–39; that stretch reads TATKGHKGQK.

It belongs to the universal ribosomal protein uL15 family. As to quaternary structure, part of the 50S ribosomal subunit.

Functionally, binds to the 23S rRNA. This Trichlorobacter lovleyi (strain ATCC BAA-1151 / DSM 17278 / SZ) (Geobacter lovleyi) protein is Large ribosomal subunit protein uL15.